The primary structure comprises 636 residues: tRNA uridine 5-carboxymethylaminomethyl modification enzyme MnmG (636 aa).

Residue 18–23 (GAGHAG) coordinates FAD. Residue 281 to 295 (GPRYCPSIEDKIVRF) participates in NAD(+) binding.

It belongs to the MnmG family. Homodimer. Heterotetramer of two MnmE and two MnmG subunits. FAD is required as a cofactor.

Its subcellular location is the cytoplasm. In terms of biological role, NAD-binding protein involved in the addition of a carboxymethylaminomethyl (cmnm) group at the wobble position (U34) of certain tRNAs, forming tRNA-cmnm(5)s(2)U34. The polypeptide is tRNA uridine 5-carboxymethylaminomethyl modification enzyme MnmG (Lactiplantibacillus plantarum (strain ATCC BAA-793 / NCIMB 8826 / WCFS1) (Lactobacillus plantarum)).